The primary structure comprises 101 residues: Small ribosomal subunit protein uS14 (101 aa).

It belongs to the universal ribosomal protein uS14 family. As to quaternary structure, part of the 30S ribosomal subunit. Contacts proteins S3 and S10.

Binds 16S rRNA, required for the assembly of 30S particles and may also be responsible for determining the conformation of the 16S rRNA at the A site. The polypeptide is Small ribosomal subunit protein uS14 (Burkholderia multivorans (strain ATCC 17616 / 249)).